Here is a 287-residue protein sequence, read N- to C-terminus: Arylamine N-acetyltransferase, liver isozyme (287 aa).

The active-site Acyl-thioester intermediate is the Cys68. Catalysis depends on residues His107 and Asp122.

The protein belongs to the arylamine N-acetyltransferase family.

It catalyses the reaction an arylamine + acetyl-CoA = an N-acetylarylamine + CoA. The sequence is that of Arylamine N-acetyltransferase, liver isozyme from Gallus gallus (Chicken).